The primary structure comprises 1273 residues: Homeobox protein cut-like ceh-44 (1273 aa).

Coiled-coil stretches lie at residues 101–407 and 440–468; these read LLKG…DGFK and RQKN…KFED. 3 DNA-binding regions (CUT) span residues 591–681, 832–919, and 978–1065; these read NVQA…LSPR, QAQY…KQPK, and IDES…KEES. Residues 1069 to 1100 form a disordered region; the sequence is VKAKIESVPAPREAPRPVKRKHSSDTDDYDLN. Residues 1103-1162 constitute a DNA-binding region (homeobox); sequence KPIQRTVITDYQKDTLRFVFVNEQHPSNELCEQISLKLDMSLRTVQNWFHNHRTRSKARE.

Belongs to the CUT homeobox family.

Its subcellular location is the nucleus. In terms of biological role, probable DNA-binding regulatory protein involved in cell-fate specification. The polypeptide is Homeobox protein cut-like ceh-44 (Caenorhabditis elegans).